Consider the following 438-residue polypeptide: Probable D-serine dehydratase (438 aa).

K114 is subject to N6-(pyridoxal phosphate)lysine.

Belongs to the serine/threonine dehydratase family. DsdA subfamily. Pyridoxal 5'-phosphate is required as a cofactor.

It catalyses the reaction D-serine = pyruvate + NH4(+). The polypeptide is Probable D-serine dehydratase (Histophilus somni (strain 2336) (Haemophilus somnus)).